A 294-amino-acid chain; its full sequence is 4-hydroxy-tetrahydrodipicolinate synthase (294 aa).

Thr47 is a binding site for pyruvate. Tyr135 acts as the Proton donor/acceptor in catalysis. Catalysis depends on Lys163, which acts as the Schiff-base intermediate with substrate. Pyruvate is bound at residue Ile206.

It belongs to the DapA family. Homodimer.

Its subcellular location is the cytoplasm. It catalyses the reaction L-aspartate 4-semialdehyde + pyruvate = (2S,4S)-4-hydroxy-2,3,4,5-tetrahydrodipicolinate + H2O + H(+). It participates in amino-acid biosynthesis; L-lysine biosynthesis via DAP pathway; (S)-tetrahydrodipicolinate from L-aspartate: step 3/4. Its function is as follows. Catalyzes the condensation of (S)-aspartate-beta-semialdehyde [(S)-ASA] and pyruvate to 4-hydroxy-tetrahydrodipicolinate (HTPA). The polypeptide is 4-hydroxy-tetrahydrodipicolinate synthase (Staphylococcus carnosus (strain TM300)).